The primary structure comprises 283 residues: Eukaryotic translation initiation factor 3 subunit K (283 aa).

Positions 52–263 (YDLLANLAIL…EIKATVIREE (212 aa)) constitute a PCI domain. Residues 114-135 (EATTTDADNAGSLSGDDDDDEV) are disordered.

The protein belongs to the eIF-3 subunit K family. Component of the eukaryotic translation initiation factor 3 (eIF-3) complex.

The protein resides in the cytoplasm. In terms of biological role, component of the eukaryotic translation initiation factor 3 (eIF-3) complex, which is involved in protein synthesis of a specialized repertoire of mRNAs and, together with other initiation factors, stimulates binding of mRNA and methionyl-tRNAi to the 40S ribosome. The eIF-3 complex specifically targets and initiates translation of a subset of mRNAs involved in cell proliferation. This Mycosarcoma maydis (Corn smut fungus) protein is Eukaryotic translation initiation factor 3 subunit K.